The chain runs to 545 residues: MRGGGFVQIFKDFSNWSTVAVVPHVANANNKISRIFWIAIFLFVLGMFAYELYILIAKFFSYPATVNTEILFEKQIFPVVTVCNMNPYKYSVVKSNSAFSSVNTLMTTYSDATVGTFSTDKWGLYADNDETYDLDSRAADALVLEANLISDTAKVPALYTYADLIQDCSFAGIPCSESDFTKFIDPVYGACYSFNEDASLNYSVSREGIQFGLKLMLTVTQTKTNGNTDSLPTTKLAGARIGVNSRGSSPGLDSNGIDAGVGYESAVSVSLTQNVRAKKPYGTCVDREPDSSDYYKDFIYTLETCFNGCKQRDTIAKCQCANPRLALGSTDTACQPIKADLDCLQTLKGNQTSSTPNIDLLVECNCNPPCDESTYTPTVSLAQFPSTSYYVATSSTAGVGSCSSTNSKFSSKSDCQKWYNNNGMIIQVFLETLSYELYTETAGYTVSNVINDLGGQAGLWLGLSVISVVEMTGLMLVMGAFCVTGGAIKMAPDDDEIENDHRIKDVEDVKKEIDHLEKKHGEMESGSDGEVDDIENKGDEEKKKK.

The Cytoplasmic segment spans residues 1–34 (MRGGGFVQIFKDFSNWSTVAVVPHVANANNKISR). The chain crosses the membrane as a helical span at residues 35–55 (IFWIAIFLFVLGMFAYELYIL). Residues 56 to 457 (IAKFFSYPAT…NVINDLGGQA (402 aa)) are Extracellular-facing. The cysteines at positions 83 and 191 are disulfide-linked. Residue N201 is glycosylated (N-linked (GlcNAc...) asparagine). 5 cysteine pairs are disulfide-bonded: C284-C370, C305-C366, C309-C364, C318-C343, and C320-C334. N-linked (GlcNAc...) asparagine glycosylation occurs at N350. Residues 458–478 (GLWLGLSVISVVEMTGLMLVM) traverse the membrane as a helical segment. The short motif at 462–464 (GLS) is the GAS motif; ion selectivity filter element. Residues 479–545 (GAFCVTGGAI…NKGDEEKKKK (67 aa)) are Cytoplasmic-facing. 2 stretches are compositionally biased toward basic and acidic residues: residues 514-523 (DHLEKKHGEM) and 534-545 (IENKGDEEKKKK). The disordered stretch occupies residues 514–545 (DHLEKKHGEMESGSDGEVDDIENKGDEEKKKK).

The protein belongs to the amiloride-sensitive sodium channel (TC 1.A.6) family. As to quaternary structure, can form homotrimers. Heterotrimer; forms functional heterotrimers producing channel with different properties.

It is found in the cell membrane. It catalyses the reaction Na(+)(in) = Na(+)(out). With respect to regulation, inhibited by the diuretic drug amiloride. Its function is as follows. Could form pH-gated heterotrimeric sodium channels that act as postsynaptic excitatory sensors in the nervous system, generating rapid, transient inward currents that fully desensitize upon extracellular acidification. The polypeptide is Degenerin-like protein asic-2 (asic-2) (Caenorhabditis elegans).